A 423-amino-acid polypeptide reads, in one-letter code: Vitamin D3 receptor (423 aa).

8 residues coordinate Zn(2+): Cys-24, Cys-27, Cys-41, Cys-44, Cys-60, Cys-66, Cys-76, and Cys-79. NR C4-type zinc fingers lie at residues 24-44 (CGVC…CEGC) and 60-84 (CPFN…LKRC). A DNA-binding region (nuclear receptor) is located at residues 24-89 (CGVCGDRATG…RLKRCVDIGM (66 aa)). The tract at residues 97-126 (DEEVQRKREMIMKRKEEEALKDSLRPKLSE) is hinge. One can recognise an NR LBD domain in the interval 127–419 (EQQHIIAILL…LTPLVLEVFG (293 aa)). Tyr-143 provides a ligand contact to calcitriol. Positions 159–180 (MDGSTGSYSPRPTLSFSGNSSS) are disordered. Low complexity predominate over residues 171–180 (TLSFSGNSSS). Ser-233 is a calcitriol binding site. Residues 242–260 (KMIPGFRDLTSDDQIVLLK) are interaction with coactivator LXXLL motif. Positions 270, 274, 301, and 393 each coordinate calcitriol. The 9aaTAD signature appears at 412-420 (PLVLEVFGN).

This sequence belongs to the nuclear hormone receptor family. NR1 subfamily. In terms of assembly, homodimer in the absence of bound vitamin D3. Heterodimer with RXRA after vitamin D3 binding. Interacts with MED1 and NCOA6. Interacts with MED1, NCOA1, NCOA2, NCOA3 and NCOA6 coactivators, leading to a strong increase of transcription of target genes. Interacts with the corepressor NCOR1. Interacts with SNW1. Interacts with IRX4, the interaction does not affect its transactivation activity. Interacts with CRY1. Interacts with CRY2 in a ligand-dependent manner. Post-translationally, ubiquitinated by UBR5, leading to its degradation: UBR5 specifically recognizes and binds ligand-bound VDR when it is not associated with coactivators (NCOAs). In presence of NCOAs, the UBR5-degron is not accessible, preventing its ubiquitination and degradation. In terms of tissue distribution, detected in intestine and kidney.

It is found in the nucleus. It localises to the cytoplasm. In terms of biological role, nuclear receptor for calcitriol, the active form of vitamin D3 which mediates the action of this vitamin on cells. Enters the nucleus upon vitamin D3 binding where it forms heterodimers with the retinoid X receptor/RXR. The VDR-RXR heterodimers bind to specific response elements on DNA and activate the transcription of vitamin D3-responsive target genes. Plays a central role in calcium homeostasis. Also functions as a receptor for the secondary bile acid lithocholic acid (LCA) and its metabolites. The polypeptide is Vitamin D3 receptor (Vdr) (Rattus norvegicus (Rat)).